The chain runs to 879 residues: Alanine--tRNA ligase (879 aa).

Positions 566, 570, 668, and 672 each coordinate Zn(2+).

The protein belongs to the class-II aminoacyl-tRNA synthetase family. Requires Zn(2+) as cofactor.

It localises to the cytoplasm. It carries out the reaction tRNA(Ala) + L-alanine + ATP = L-alanyl-tRNA(Ala) + AMP + diphosphate. Catalyzes the attachment of alanine to tRNA(Ala) in a two-step reaction: alanine is first activated by ATP to form Ala-AMP and then transferred to the acceptor end of tRNA(Ala). Also edits incorrectly charged Ser-tRNA(Ala) and Gly-tRNA(Ala) via its editing domain. This is Alanine--tRNA ligase from Clostridium tetani (strain Massachusetts / E88).